We begin with the raw amino-acid sequence, 243 residues long: Triosephosphate isomerase (243 aa).

Residue 9–11 (NWK) coordinates substrate. His-96 (electrophile) is an active-site residue. Catalysis depends on Glu-165, which acts as the Proton acceptor. Substrate-binding positions include Gly-171, Ser-204, and 225–226 (GG).

The protein belongs to the triosephosphate isomerase family. In terms of assembly, homodimer.

Its subcellular location is the cytoplasm. The catalysed reaction is D-glyceraldehyde 3-phosphate = dihydroxyacetone phosphate. It participates in carbohydrate biosynthesis; gluconeogenesis. Its pathway is carbohydrate degradation; glycolysis; D-glyceraldehyde 3-phosphate from glycerone phosphate: step 1/1. Involved in the gluconeogenesis. Catalyzes stereospecifically the conversion of dihydroxyacetone phosphate (DHAP) to D-glyceraldehyde-3-phosphate (G3P). In Synechococcus sp. (strain WH7803), this protein is Triosephosphate isomerase.